Reading from the N-terminus, the 98-residue chain is NADH-ubiquinone oxidoreductase chain 4L (98 aa).

The next 3 membrane-spanning stretches (helical) occupy residues methionine 1–methionine 21, leucine 26–isoleucine 46, and methionine 59–valine 79.

This sequence belongs to the complex I subunit 4L family. Core subunit of respiratory chain NADH dehydrogenase (Complex I) which is composed of 45 different subunits.

The protein localises to the mitochondrion inner membrane. The catalysed reaction is a ubiquinone + NADH + 5 H(+)(in) = a ubiquinol + NAD(+) + 4 H(+)(out). Core subunit of the mitochondrial membrane respiratory chain NADH dehydrogenase (Complex I) which catalyzes electron transfer from NADH through the respiratory chain, using ubiquinone as an electron acceptor. Part of the enzyme membrane arm which is embedded in the lipid bilayer and involved in proton translocation. The chain is NADH-ubiquinone oxidoreductase chain 4L (MT-ND4L) from Pontoporia blainvillei (Franciscana).